A 197-amino-acid polypeptide reads, in one-letter code: 7-methyl-GTP pyrophosphatase (197 aa).

Residue D73 is the Proton acceptor of the active site.

It belongs to the Maf family. YceF subfamily. Requires a divalent metal cation as cofactor.

The protein localises to the cytoplasm. It catalyses the reaction N(7)-methyl-GTP + H2O = N(7)-methyl-GMP + diphosphate + H(+). Its function is as follows. Nucleoside triphosphate pyrophosphatase that hydrolyzes 7-methyl-GTP (m(7)GTP). May have a dual role in cell division arrest and in preventing the incorporation of modified nucleotides into cellular nucleic acids. The chain is 7-methyl-GTP pyrophosphatase from Alcanivorax borkumensis (strain ATCC 700651 / DSM 11573 / NCIMB 13689 / SK2).